We begin with the raw amino-acid sequence, 327 residues long: E3 ubiquitin ligase Rnf121 (327 aa).

The next 5 helical transmembrane spans lie at 50-70, 79-96, 99-119, 148-168, and 173-193; these read MHAEMVLILIATLVVAQLLLV, SYNMVTLFQMWIVPVYFT, LHWWRFLGIWIVFSIITAYIT, ATGIVGYIAVMFTLFGLNLLF, and EDAMDFGISLLFYGLYYGVLG. An RING-type; atypical zinc finger spans residues 226-276; sequence CAVCGQQIFVDVNEEGIIENTYRLSCNHVFHEFCIRGWCIVGKKQTCPYCK.

This sequence belongs to the RNF121 family.

The protein resides in the endoplasmic reticulum membrane. It catalyses the reaction S-ubiquitinyl-[E2 ubiquitin-conjugating enzyme]-L-cysteine + [acceptor protein]-L-lysine = [E2 ubiquitin-conjugating enzyme]-L-cysteine + N(6)-ubiquitinyl-[acceptor protein]-L-lysine.. Its pathway is protein modification; protein ubiquitination. Functionally, E3 ubiquitin ligase which accepts ubiquitin and transfers it to substrates thereby promoting their degradation by the endoplasmic reticulum-associated degradation (ERAD) pathway which is a pathway involved in ubiquitin-dependent degradation of misfolded endoplasmic reticulum proteins. May regulate the unfolded protein response to reduce endoplasmic reticulum stress. The chain is E3 ubiquitin ligase Rnf121 (rnf121) from Xenopus laevis (African clawed frog).